Here is a 218-residue protein sequence, read N- to C-terminus: Small ribosomal subunit protein uS5 (218 aa).

Positions 1 to 10 are enriched in polar residues; that stretch reads MTQATNQTPG. The segment at 1-63 is disordered; the sequence is MTQATNQTPG…GRDERDSEWQ (63 aa). Residues 11-25 show a composition bias toward low complexity; sequence QDVPGAADVPAAAEG. Positions 31–63 are enriched in basic and acidic residues; sequence GERRGGGGGRGGDRRGRGDRRGRGRDERDSEWQ. The region spanning 62–125 is the S5 DRBM domain; that stretch reads WQERVIQIRR…ADGKKHLVKV (64 aa).

It belongs to the universal ribosomal protein uS5 family. As to quaternary structure, part of the 30S ribosomal subunit. Contacts proteins S4 and S8.

With S4 and S12 plays an important role in translational accuracy. Its function is as follows. Located at the back of the 30S subunit body where it stabilizes the conformation of the head with respect to the body. This Synechococcus sp. (strain RCC307) protein is Small ribosomal subunit protein uS5.